We begin with the raw amino-acid sequence, 226 residues long: ATP-dependent dethiobiotin synthetase BioD (226 aa).

12 to 17 (GIGKTV) lines the ATP pocket. Residue T16 coordinates Mg(2+). The active site involves K37. T41 contacts substrate. ATP contacts are provided by residues D49, 108–111 (EGAG), 169–170 (GS), and 197–199 (PAG). The Mg(2+) site is built by D49 and E108.

This sequence belongs to the dethiobiotin synthetase family. In terms of assembly, homodimer. It depends on Mg(2+) as a cofactor.

The protein resides in the cytoplasm. The catalysed reaction is (7R,8S)-7,8-diammoniononanoate + CO2 + ATP = (4R,5S)-dethiobiotin + ADP + phosphate + 3 H(+). The protein operates within cofactor biosynthesis; biotin biosynthesis; biotin from 7,8-diaminononanoate: step 1/2. In terms of biological role, catalyzes a mechanistically unusual reaction, the ATP-dependent insertion of CO2 between the N7 and N8 nitrogen atoms of 7,8-diaminopelargonic acid (DAPA, also called 7,8-diammoniononanoate) to form a ureido ring. The sequence is that of ATP-dependent dethiobiotin synthetase BioD from Mycolicibacterium gilvum (strain PYR-GCK) (Mycobacterium gilvum (strain PYR-GCK)).